The sequence spans 587 residues: Zinc finger protein 69 (587 aa).

The interval 42 to 128 (NGTQQESLAD…TPGTTAAGSQ (87 aa)) is disordered. The KRAB domain occupies 76–147 (HDEATPGTPA…VDLSQEEWGQ (72 aa)). C2H2-type zinc fingers lie at residues 271–293 (HKKKRQEGNKLENPESSNVILEQ), 299–321 (KPARKRNKYKLDSIDHPVSCMRA), 327–349 (NVCEKMFKQPIHLVEHMRTHTGE), 355–377 (KECGRAFSQSASLNTHQRIHTGE), 383–405 (EECGKAFRHRSSLNQHHRTHTGE), 411–433 (DKCQKAFSQNISLVQHLRTHSGE), 439–461 (SECGKPFRQIRHLSEHVRIHTGE), 467–489 (TSCCKTFSHRAYLTHHQRIHTGE), and 495–517 (KECGKAFRQRIHLSNHRTVHTGV). The interval 564–587 (SRHQKIHRRNTFRDDPGHENKRQL) is disordered. The segment covering 574–587 (TFRDDPGHENKRQL) has biased composition (basic and acidic residues).

Belongs to the krueppel C2H2-type zinc-finger protein family.

The protein localises to the nucleus. In terms of biological role, putative transcription factor that appears to regulate lipid metabolism. The chain is Zinc finger protein 69 from Mus musculus (Mouse).